The chain runs to 271 residues: MNIKQFFVPAGKPLSGLAVGLSIFLTALFLVNNLVYPINEHLLLKPDSLFKFDLNRISLYPLAHLSFFHLFFNVISTFSMIVMFEESHGTLYTGVILNLLAVFTAIPYCLIGSLLFPNVEIGGASGWFFSFLGYFAVKESRVRNSVMITSTFSFPTLYFPVALLFVTALLAPGSSLPGHAIGLLLGYFMGLKENWVAKITPPSFVLKKIETWVDPLINLIPFGIKYYREVEVDRSLEYTSVYLGSESRLPLHNTDTPAEPTFQGNGRVLGN.

Transmembrane regions (helical) follow at residues 16-36 (GLAVGLSIFLTALFLVNNLVY), 64-84 (HLSFFHLFFNVISTFSMIVMF), 89-111 (GTLYTGVILNLLAVFTAIPYCLI), 115-137 (LFPNVEIGGASGWFFSFLGYFAV), 152-172 (FSFPTLYFPVALLFVTALLAP), and 176-196 (LPGHAIGLLLGYFMGLKENWV). The Nucleophile role is filled by Ser-125. His-179 is a catalytic residue. The segment at 252-271 (HNTDTPAEPTFQGNGRVLGN) is disordered.

This sequence belongs to the peptidase S54 family.

The protein localises to the golgi apparatus membrane. It is found in the golgi apparatus. The protein resides in the cis-Golgi network membrane. It catalyses the reaction Cleaves type-1 transmembrane domains using a catalytic dyad composed of serine and histidine that are contributed by different transmembrane domains.. Probable rhomboid-type serine protease that catalyzes intramembrane proteolysis. The chain is Rhomboid-type serine protease 2 (RBD2) from Kluyveromyces lactis (strain ATCC 8585 / CBS 2359 / DSM 70799 / NBRC 1267 / NRRL Y-1140 / WM37) (Yeast).